We begin with the raw amino-acid sequence, 224 residues long: Large ribosomal subunit protein uL3 (224 aa).

Glutamine 158 carries the post-translational modification N5-methylglutamine.

The protein belongs to the universal ribosomal protein uL3 family. As to quaternary structure, part of the 50S ribosomal subunit. Forms a cluster with proteins L14 and L19. In terms of processing, methylated by PrmB.

One of the primary rRNA binding proteins, it binds directly near the 3'-end of the 23S rRNA, where it nucleates assembly of the 50S subunit. This Paracidovorax citrulli (strain AAC00-1) (Acidovorax citrulli) protein is Large ribosomal subunit protein uL3.